Here is a 215-residue protein sequence, read N- to C-terminus: Hibernation-associated plasma protein HP-27 (215 aa).

The N-terminal stretch at 1–30 (MYEAGKRASFMGGAGIWILALSVLMHVVCS) is a signal peptide. A disordered region spans residues 34–79 (GNPESCNVPGPQGPPGMRGPPGTPGKPGPPGWNGFPGLPGPPGPPG). The Collagen-like domain occupies 43–81 (GPQGPPGMRGPPGTPGKPGPPGWNGFPGLPGPPGPPGMT). Positions 44-63 (PQGPPGMRGPPGTPGKPGPP) are enriched in pro residues. The region spanning 85–215 (HSKGTSAFAV…VFSGFLIHEN (131 aa)) is the C1q domain. N155 carries an N-linked (GlcNAc...) asparagine glycan.

Plasma; synthesized in the liver.

The protein localises to the secreted. Plasma proteins HP-20, HP-25, HP-27 and HP-55 form a 140 kDa complex via disulfide bonds in the plasma and are hibernation specific. This is Hibernation-associated plasma protein HP-27 from Tamias sibiricus (Siberian chipmunk).